A 246-amino-acid polypeptide reads, in one-letter code: Serine protease 1 (246 aa).

Residues 1-15 (MKTFIFLALLGATVA) form the signal peptide. Residues 16 to 23 (FPIDDDDK) constitute a propeptide, activation peptide. Positions 24–244 (IVGGYTCSRN…YVSWIQQTIA (221 aa)) constitute a Peptidase S1 domain. Disulfide bonds link Cys30–Cys160, Cys48–Cys64, Cys132–Cys233, Cys139–Cys206, Cys171–Cys185, and Cys196–Cys220. His63 (charge relay system) is an active-site residue. Ca(2+) contacts are provided by Glu75, Asn77, Val80, and Glu85. Asp107 (charge relay system) is an active-site residue. Catalysis depends on Ser200, which acts as the Charge relay system.

This sequence belongs to the peptidase S1 family. Interacts with SERPINA1. The cofactor is Ca(2+).

The protein localises to the secreted. The protein resides in the extracellular space. It carries out the reaction Preferential cleavage: Arg-|-Xaa, Lys-|-Xaa.. The polypeptide is Serine protease 1 (Canis lupus familiaris (Dog)).